A 346-amino-acid chain; its full sequence is Enkurin domain-containing protein 1 (346 aa).

3 disordered regions span residues 1–24 (MCEG…DYYR), 88–107 (SGVS…NLRR), and 113–132 (RRFQ…PLKA). Phosphoserine is present on Ser-91. 2 stretches are compositionally biased toward basic and acidic residues: residues 98–107 (KDHEKENLRR) and 113–125 (RRFQ…REQG). Position 136 is a phosphoserine (Ser-136). The region spanning 251 to 343 (ERRDLWRKEA…IFSRPKVFVK (93 aa)) is the Enkurin domain. Positions 259 to 280 (EAEARQRSQPDPSMPPGHTLMP) are disordered.

Interacts with alpha-tubulin. Interacts (via central region) with CCP110 (via N-terminal region); competes with CEP97 for binding to CCP110. Widely expressed with highest levels in testis and lung.

The protein resides in the cytoplasm. The protein localises to the cytoskeleton. It is found in the microtubule organizing center. It localises to the centrosome. Its subcellular location is the centriole. The protein resides in the cilium basal body. The protein localises to the cell projection. It is found in the cilium. It localises to the spindle. Its subcellular location is the spindle pole. The protein resides in the cilium axoneme. Functionally, microtubule-binding protein which regulates microtubule organization and stability. Promotes the stability of astral microtubules and facilitates the proper orientation of the mitotic spindle. This allows the oriented division of basal keratinocytes and contributes to epidermal stratification. Required for the assembly of both primary and motile cilia. Destabilizes the interaction between CCP110 and CEP97 by competing with CEP97 for binding to CCP110 which promotes the removal of CCP110 and CEP97 from the mother centriole and allows the initiation of ciliogenesis. The protein is Enkurin domain-containing protein 1 (Enkd1) of Mus musculus (Mouse).